The primary structure comprises 129 residues: Small ribosomal subunit protein uS11 (129 aa).

It belongs to the universal ribosomal protein uS11 family. Part of the 30S ribosomal subunit. Interacts with proteins S7 and S18. Binds to IF-3.

Functionally, located on the platform of the 30S subunit, it bridges several disparate RNA helices of the 16S rRNA. Forms part of the Shine-Dalgarno cleft in the 70S ribosome. This Agrobacterium fabrum (strain C58 / ATCC 33970) (Agrobacterium tumefaciens (strain C58)) protein is Small ribosomal subunit protein uS11.